The primary structure comprises 435 residues: MRKIIAGVFIFVFLISNLYADLVAEVTTGVIQKPLVTVVSDNVVDQFPQQVNSVMVADLNHNAKLQANDTIKYEIKQKQNIPWKSLKSDYVVLTKYTNNSYNNYTVEVQILKRNDTSYLQAITYKNINVSLMRTLAHKISNYVYQKLTGNQGFFLTKLAYVKVSNLYARYGRLYELIISDYDGYNKHVVLRQTDNPIATPSWSNDGRYIVYSSYSGGSMGVYTLEIATGKVTRITNYKGINSSPSFSPDGKEIALALSKGYSDQTNIYIMNLATKALKRITINGINTAPKFSPNGQSIVFTSDREGRPNIYVASVNSKYPQSSILSTKIHQAYEPNYTPDGKNIVFMNQSSRTSGTQIADFNLVNGSVTNITNGKADSSPTVSPYGDMVAYISTNTRGYSSLDMVSLDGDNHFNIETADNGNILIQSPSWSPKNF.

Positions 1-20 (MRKIIAGVFIFVFLISNLYA) are cleaved as a signal peptide.

The protein belongs to the TolB family. In terms of assembly, the Tol-Pal system is composed of five core proteins: the inner membrane proteins TolA, TolQ and TolR, the periplasmic protein TolB and the outer membrane protein Pal. They form a network linking the inner and outer membranes and the peptidoglycan layer.

The protein resides in the periplasm. Part of the Tol-Pal system, which plays a role in outer membrane invagination during cell division and is important for maintaining outer membrane integrity. The sequence is that of Tol-Pal system protein TolB from Francisella tularensis subsp. holarctica (strain LVS).